A 157-amino-acid chain; its full sequence is Protein Smg (157 aa).

This sequence belongs to the Smg family.

This chain is Protein Smg, found in Salmonella agona (strain SL483).